Here is a 328-residue protein sequence, read N- to C-terminus: 2,4-dinitroanisole O-demethylase subunit alpha (328 aa).

Positions 1–9 (MSVTSQTSS) are excised as a propeptide. Zn(2+) contacts are provided by His101, His103, Asp105, His168, His225, and Cys247.

This sequence belongs to the metallo-beta-lactamase superfamily. Part of the complex DnhAB composed of the 2,4-dinitroanisole O-demethylase alpha (DnhA) and beta (DnhB) subunits. It depends on Zn(2+) as a cofactor.

The catalysed reaction is 2,4-dinitroanisole + H2O = 2,4-dinitrophenol + methanol + H(+). Functionally, involved in the degradation of 2,4-dinitroanisole (DNAN), an insensitive munition ingredient used in explosive formulations as a replacement for 2,4,6-trinitrotoluene (TNT). Catalyzes the removal of the methyl group from 2,4-dinitroanisole (DNAN) to yield 2,4-dinitrophenol (2,4-DNP) and methanol. In Nocardioides sp. (strain JS1661), this protein is 2,4-dinitroanisole O-demethylase subunit alpha.